A 401-amino-acid polypeptide reads, in one-letter code: Glutamyl-tRNA reductase (401 aa).

Substrate-binding positions include Thr45–Arg48, Ser101, Glu106–Gln108, and Gln112. Cys46 acts as the Nucleophile in catalysis. An NADP(+)-binding site is contributed by Gly177–Gly182.

Belongs to the glutamyl-tRNA reductase family. Homodimer.

It catalyses the reaction (S)-4-amino-5-oxopentanoate + tRNA(Glu) + NADP(+) = L-glutamyl-tRNA(Glu) + NADPH + H(+). The protein operates within porphyrin-containing compound metabolism; protoporphyrin-IX biosynthesis; 5-aminolevulinate from L-glutamyl-tRNA(Glu): step 1/2. Catalyzes the NADPH-dependent reduction of glutamyl-tRNA(Glu) to glutamate 1-semialdehyde (GSA). This is Glutamyl-tRNA reductase from Clostridium botulinum (strain Eklund 17B / Type B).